The primary structure comprises 254 residues: Imidazole glycerol phosphate synthase subunit HisF (254 aa).

Active-site residues include Asp12 and Asp131.

It belongs to the HisA/HisF family. In terms of assembly, heterodimer of HisH and HisF.

The protein localises to the cytoplasm. It catalyses the reaction 5-[(5-phospho-1-deoxy-D-ribulos-1-ylimino)methylamino]-1-(5-phospho-beta-D-ribosyl)imidazole-4-carboxamide + L-glutamine = D-erythro-1-(imidazol-4-yl)glycerol 3-phosphate + 5-amino-1-(5-phospho-beta-D-ribosyl)imidazole-4-carboxamide + L-glutamate + H(+). The protein operates within amino-acid biosynthesis; L-histidine biosynthesis; L-histidine from 5-phospho-alpha-D-ribose 1-diphosphate: step 5/9. Its function is as follows. IGPS catalyzes the conversion of PRFAR and glutamine to IGP, AICAR and glutamate. The HisF subunit catalyzes the cyclization activity that produces IGP and AICAR from PRFAR using the ammonia provided by the HisH subunit. The protein is Imidazole glycerol phosphate synthase subunit HisF of Rhizorhabdus wittichii (strain DSM 6014 / CCUG 31198 / JCM 15750 / NBRC 105917 / EY 4224 / RW1) (Sphingomonas wittichii).